Consider the following 195-residue polypeptide: MPFQDVSAPVRGGILHTARLVHTSDLDQETREGARRMVIEAFEGDFSDADWEHALGGMHAFICHHGALIAHAAVVQRRLLYRDTALRCGYVEAVAVREDWRGQGLATAVMDAVEQVLRGAYQLGALSASDTARGMYLSRGWLPWQGPTSVLQPAGVTRTPEDDEGLFVLPVGLPAGMELDTTAEITCDWRDGDVW.

In terms of domain architecture, N-acetyltransferase spans 21-180; that stretch reads VHTSDLDQET…VGLPAGMELD (160 aa). Residues D45 and 92 to 93 each bind substrate; that span reads EA. Residues 94–96 and 101–106 each bind CoA; these read VAV and RGQGLA. Residues S127 and 161–162 each bind substrate; that span reads ED.

This sequence belongs to the AAC(2')-I acetyltransferase family. In terms of assembly, homodimer.

Confers resistance to gentamicin, tobramycin, dibekacin, netilmicin, and 6'-N-ethylnetilmicin. The polypeptide is Aminoglycoside 2'-N-acetyltransferase (aac) (Mycolicibacterium fortuitum (Mycobacterium fortuitum)).